Here is a 250-residue protein sequence, read N- to C-terminus: Probable transcriptional regulatory protein SAV_6832 (250 aa).

Belongs to the TACO1 family.

The protein localises to the cytoplasm. This is Probable transcriptional regulatory protein SAV_6832 from Streptomyces avermitilis (strain ATCC 31267 / DSM 46492 / JCM 5070 / NBRC 14893 / NCIMB 12804 / NRRL 8165 / MA-4680).